Reading from the N-terminus, the 503-residue chain is Probable DNA ligase (503 aa).

Glutamate 210 contributes to the ATP binding site. The active-site N6-AMP-lysine intermediate is the lysine 212. Arginine 217, arginine 232, glutamate 261, phenylalanine 296, arginine 367, and lysine 373 together coordinate ATP.

Belongs to the ATP-dependent DNA ligase family. Requires Mg(2+) as cofactor.

The catalysed reaction is ATP + (deoxyribonucleotide)n-3'-hydroxyl + 5'-phospho-(deoxyribonucleotide)m = (deoxyribonucleotide)n+m + AMP + diphosphate.. Its function is as follows. DNA ligase that seals nicks in double-stranded DNA during DNA replication, DNA recombination and DNA repair. The polypeptide is Probable DNA ligase (Rhodococcus opacus (strain B4)).